A 338-amino-acid chain; its full sequence is Cytosolic sulfotransferase 16 (338 aa).

3'-phosphoadenylyl sulfate is bound at residue 81–86; sequence KTGTTW. His-143 (proton acceptor) is an active-site residue. Residues Arg-165, Ser-173, Tyr-231, and 301 to 303 contribute to the 3'-phosphoadenylyl sulfate site; that span reads RKG.

Belongs to the sulfotransferase 1 family. In terms of tissue distribution, highly expressed in roots, stems and mature leaves. Low expression in young leaves and flowers. Barely detected in siliques.

Its subcellular location is the cytoplasm. It catalyses the reaction (Z)-desulfoglucotropeolin + 3'-phosphoadenylyl sulfate = (Z)-glucotropeolin + adenosine 3',5'-bisphosphate + H(+). The enzyme catalyses (Z)-indolylmethyl desulfoglucosinolate + 3'-phosphoadenylyl sulfate = (Z)-glucobrassicin + adenosine 3',5'-bisphosphate + H(+). With respect to regulation, inhibited by phosphoadenosine 5'-phosphate (PAP). Functionally, sulfotransferase that utilizes 3'-phospho-5'-adenylyl sulfate (PAPS) as sulfonate donor to catalyze the sulfate conjugation of desulfo-glucosinolates (dsGSs), the final step in the biosynthesis of the glucosinolate core structure. Substrate preference is desulfo-2-phenylethyl glucosinolate &gt; desulfo-indol-3-yl methyl glucosinolate &gt; desulfo-benzyl glucosinolate &gt; desulfo-6-methylthiohexyl glucosinolate &gt; desulfo-4-methylthiobutyl glucosinolate &gt; desulfo-3-methylthiopropyl glucosinolate &gt; desulfo-singrin &gt; desulfo-3-butenyl glucosinolate. The sequence is that of Cytosolic sulfotransferase 16 (SOT16) from Arabidopsis thaliana (Mouse-ear cress).